Here is a 479-residue protein sequence, read N- to C-terminus: Serine carboxypeptidase-like 44 (479 aa).

The signal sequence occupies residues 1-22; the sequence is MVGGKWRFLEVAVVVMVLQWSC. 3 disulfides stabilise this stretch: Cys92–Cys352, Cys253–Cys270, and Cys295–Cys320. Residue Asn143 is glycosylated (N-linked (GlcNAc...) asparagine). Ser184 is a catalytic residue. A glycan (N-linked (GlcNAc...) asparagine) is linked at Asn265. An N-linked (GlcNAc...) asparagine glycan is attached at Asn341. Residue Asp389 is part of the active site. N-linked (GlcNAc...) asparagine glycosylation occurs at Asn411. His446 is a catalytic residue.

The protein belongs to the peptidase S10 family. In terms of tissue distribution, expressed in seedlings.

Its subcellular location is the secreted. Its function is as follows. Probable carboxypeptidase. This chain is Serine carboxypeptidase-like 44 (SCPL44), found in Arabidopsis thaliana (Mouse-ear cress).